A 257-amino-acid chain; its full sequence is Snake venom serine protease KN8 (257 aa).

Residues 1-18 (MVLIRVLANLLILQLSYA) form the signal peptide. Positions 19-24 (QKSSEL) are excised as a propeptide. The region spanning 25–248 (VVGGLPCNIN…HLDWIKSIIA (224 aa)) is the Peptidase S1 domain. 5 disulfides stabilise this stretch: Cys31-Cys162, Cys49-Cys65, Cys141-Cys209, Cys173-Cys188, and Cys199-Cys224. His64 serves as the catalytic Charge relay system. A glycan (N-linked (GlcNAc...) asparagine) is linked at Asn102. Asp109 acts as the Charge relay system in catalysis. N-linked (GlcNAc...) asparagine glycans are attached at residues Asn120 and Asn121. Ser203 acts as the Charge relay system in catalysis.

Belongs to the peptidase S1 family. Snake venom subfamily. As to quaternary structure, monomer. Expressed by the venom gland.

The protein resides in the secreted. Functionally, snake venom serine protease that may act in the hemostasis system of the prey. This Trimeresurus stejnegeri (Chinese green tree viper) protein is Snake venom serine protease KN8.